A 252-amino-acid polypeptide reads, in one-letter code: 5'-nucleotidase SurE (252 aa).

Residues D8, D9, S42, and N94 each contribute to the a divalent metal cation site.

It belongs to the SurE nucleotidase family. A divalent metal cation serves as cofactor.

It localises to the cytoplasm. It catalyses the reaction a ribonucleoside 5'-phosphate + H2O = a ribonucleoside + phosphate. Nucleotidase that shows phosphatase activity on nucleoside 5'-monophosphates. This is 5'-nucleotidase SurE from Ehrlichia ruminantium (strain Gardel).